We begin with the raw amino-acid sequence, 389 residues long: S-adenosylmethionine synthase (389 aa).

His19 is an ATP binding site. A Mg(2+)-binding site is contributed by Asp21. Glu47 provides a ligand contact to K(+). 2 residues coordinate L-methionine: Glu60 and Gln103. The tract at residues 103–113 is flexible loop; sequence QSVDIAQGVDR. Residues 168–170, 234–235, Asp243, 249–250, Ala266, and Lys270 each bind ATP; these read DGK, RF, and RK. Asp243 contacts L-methionine. Lys274 is a binding site for L-methionine.

This sequence belongs to the AdoMet synthase family. Homotetramer; dimer of dimers. It depends on Mg(2+) as a cofactor. K(+) is required as a cofactor.

It is found in the cytoplasm. The enzyme catalyses L-methionine + ATP + H2O = S-adenosyl-L-methionine + phosphate + diphosphate. The protein operates within amino-acid biosynthesis; S-adenosyl-L-methionine biosynthesis; S-adenosyl-L-methionine from L-methionine: step 1/1. Its function is as follows. Catalyzes the formation of S-adenosylmethionine (AdoMet) from methionine and ATP. The overall synthetic reaction is composed of two sequential steps, AdoMet formation and the subsequent tripolyphosphate hydrolysis which occurs prior to release of AdoMet from the enzyme. The sequence is that of S-adenosylmethionine synthase from Maridesulfovibrio salexigens (strain ATCC 14822 / DSM 2638 / NCIMB 8403 / VKM B-1763) (Desulfovibrio salexigens).